The following is a 246-amino-acid chain: MTKRSWNIRLEDMVAARVHLGHDIKKRNPRMAPYISAKLKDTDITNLKKTARFLSETCDLVFEAASKGKKFLIVGTKKEVANSVAQAARTAGCHYVNQKWLGGMLTNWSTTKKRLHKFRDLIRQQGRLNRLPKRDAAILKRQLFHLQKSLGGVKYMKELPDIVIILDQHGEFTALRECISLRIPTIGLIDTNCDPDLVDLPIPANDDSIPSIRFILNKLILAICKGRSRRTITSRPSHIKKKEKNR.

The protein belongs to the universal ribosomal protein uS2 family.

It localises to the plastid. The protein localises to the chloroplast. This Pelargonium hortorum (Common geranium) protein is Small ribosomal subunit protein uS2c (rps2).